Reading from the N-terminus, the 147-residue chain is Large ribosomal subunit protein bL9 (147 aa).

This sequence belongs to the bacterial ribosomal protein bL9 family.

Binds to the 23S rRNA. The sequence is that of Large ribosomal subunit protein bL9 from Phocaeicola vulgatus (strain ATCC 8482 / DSM 1447 / JCM 5826 / CCUG 4940 / NBRC 14291 / NCTC 11154) (Bacteroides vulgatus).